Here is an 843-residue protein sequence, read N- to C-terminus: INO80 complex subunit D-B (843 aa).

A compositionally biased stretch (basic and acidic residues) spans 159 to 175 (TLNHKQKQQDHSVDTNH). Disordered stretches follow at residues 159–216 (TLNH…PTVR), 221–240 (FKTS…STDN), 503–550 (YHHH…LPQG), 695–726 (SLLH…HLTD), and 791–843 (LSTP…TAAP). 3 stretches are compositionally biased toward polar residues: residues 176–187 (LRTSSLPSTLSH), 197–216 (RATQ…PTVR), and 221–231 (FKTSSSLQDTH). A compositionally biased stretch (basic residues) spans 503–540 (YHHHQQIQRHRPLKKAKPPALSKKHKKKGKRGTQRRPQ). Pro residues predominate over residues 705–717 (PPSPPSPQPPLTP). Residues 796–821 (QPSSALSALPQSSQTRSTTTSPTSQT) are compositionally biased toward low complexity.

Belongs to the INO80D family. As to quaternary structure, component of the chromatin-remodeling INO80 complex.

It is found in the nucleus. Putative regulatory component of the chromatin remodeling INO80 complex which is involved in transcriptional regulation, DNA replication and probably DNA repair. The sequence is that of INO80 complex subunit D-B (ino80db) from Danio rerio (Zebrafish).